The primary structure comprises 857 residues: Protein ARG5,6, mitochondrial (857 aa).

Residues 341-492 (INRNSLRDFG…FDSSSIGSSL (152 aa)) form the N-acetyltransferase domain. The interval 509–532 (GFHHSTVRRNTNPNPPLSEGKQTE) is disordered. The active site involves Cys-669.

This sequence in the N-terminal section; belongs to the acetylglutamate kinase family. The protein in the C-terminal section; belongs to the NAGSA dehydrogenase family.

Its subcellular location is the mitochondrion. It catalyses the reaction N-acetyl-L-glutamate 5-semialdehyde + phosphate + NADP(+) = N-acetyl-L-glutamyl 5-phosphate + NADPH + H(+). The enzyme catalyses N-acetyl-L-glutamate + ATP = N-acetyl-L-glutamyl 5-phosphate + ADP. It functions in the pathway amino-acid biosynthesis; L-arginine biosynthesis; N(2)-acetyl-L-ornithine from L-glutamate: step 2/4. It participates in amino-acid biosynthesis; L-arginine biosynthesis; N(2)-acetyl-L-ornithine from L-glutamate: step 3/4. The protein is Protein ARG5,6, mitochondrial (ARG5,6) of Candida albicans (Yeast).